We begin with the raw amino-acid sequence, 373 residues long: Enoyl-[acyl-carrier-protein] reductase, mitochondrial (373 aa).

A mitochondrion-targeting transit peptide spans 1–53 (MLVSRRLTGARARAPLLASLLEAWCRQGRTTSSYSAFSEPSHVRALVYGNHGD). An N6-acetyllysine; alternate modification is found at Lys-61. N6-succinyllysine; alternate is present on Lys-61. Tyr-94 functions as the Proton donor in the catalytic mechanism. Residues Asn-167, 193–196 (NSGV), and 216–218 (RDR) each bind NADP(+). N6-acetyllysine; alternate is present on residues Lys-252 and Lys-267. N6-succinyllysine; alternate is present on residues Lys-252 and Lys-267. Residues 285–288 (YGGM) and 310–312 (FWL) each bind NADP(+). Lys-316 carries the post-translational modification N6-succinyllysine. Lys-368 contacts NADP(+).

This sequence belongs to the zinc-containing alcohol dehydrogenase family. Quinone oxidoreductase subfamily. In terms of assembly, homodimer. As to quaternary structure, interacts with PPARA in the nucleus and increases its activity.

It localises to the mitochondrion. Its subcellular location is the cytoplasm. The protein resides in the nucleus. The catalysed reaction is a 2,3-saturated acyl-[ACP] + NADP(+) = a (2E)-enoyl-[ACP] + NADPH + H(+). It catalyses the reaction (2E)-butenoyl-[ACP] + NADPH + H(+) = butanoyl-[ACP] + NADP(+). It carries out the reaction (2E)-hexenoyl-[ACP] + NADPH + H(+) = hexanoyl-[ACP] + NADP(+). The enzyme catalyses (2E)-octenoyl-[ACP] + NADPH + H(+) = octanoyl-[ACP] + NADP(+). The catalysed reaction is (2E)-decenoyl-[ACP] + NADPH + H(+) = decanoyl-[ACP] + NADP(+). It catalyses the reaction (2E)-dodecenoyl-[ACP] + NADPH + H(+) = dodecanoyl-[ACP] + NADP(+). It carries out the reaction (2E)-tetradecenoyl-[ACP] + NADPH + H(+) = tetradecanoyl-[ACP] + NADP(+). The enzyme catalyses (2E)-hexadecenoyl-[ACP] + NADPH + H(+) = hexadecanoyl-[ACP] + NADP(+). Functionally, catalyzes the NADPH-dependent reduction of trans-2-enoyl thioesters in mitochondrial fatty acid synthesis (fatty acid synthesis type II). Fatty acid chain elongation in mitochondria uses acyl carrier protein (ACP) as an acyl group carrier, but the enzyme accepts both ACP and CoA thioesters as substrates in vitro. Displays a preference for medium-chain over short- and long-chain substrates. May provide the octanoyl chain used for lipoic acid biosynthesis, regulating protein lipoylation and mitochondrial respiratory activity particularly in Purkinje cells. Involved in iron homeostasis; affecting Fe-S cluster assembly and ceramide metabolism. Required for proper morphology and bioenergetic functions of mitochondria. Required for maintenance of neurons. The protein is Enoyl-[acyl-carrier-protein] reductase, mitochondrial (Mecr) of Rattus norvegicus (Rat).